The primary structure comprises 233 residues: N-(5'-phosphoribosyl)anthranilate isomerase (233 aa).

The protein belongs to the TrpF family.

It catalyses the reaction N-(5-phospho-beta-D-ribosyl)anthranilate = 1-(2-carboxyphenylamino)-1-deoxy-D-ribulose 5-phosphate. The protein operates within amino-acid biosynthesis; L-tryptophan biosynthesis; L-tryptophan from chorismate: step 3/5. The protein is N-(5'-phosphoribosyl)anthranilate isomerase of Synechococcus sp. (strain JA-2-3B'a(2-13)) (Cyanobacteria bacterium Yellowstone B-Prime).